Reading from the N-terminus, the 137-residue chain is ATP synthase epsilon chain (137 aa).

Belongs to the ATPase epsilon chain family. In terms of assembly, F-type ATPases have 2 components, CF(1) - the catalytic core - and CF(0) - the membrane proton channel. CF(1) has five subunits: alpha(3), beta(3), gamma(1), delta(1), epsilon(1). CF(0) has three main subunits: a, b and c.

The protein resides in the cellular thylakoid membrane. Functionally, produces ATP from ADP in the presence of a proton gradient across the membrane. In Synechococcus sp. (strain JA-2-3B'a(2-13)) (Cyanobacteria bacterium Yellowstone B-Prime), this protein is ATP synthase epsilon chain.